The sequence spans 157 residues: 2-C-methyl-D-erythritol 2,4-cyclodiphosphate synthase (157 aa).

The a divalent metal cation site is built by Asp8 and His10. 4-CDP-2-C-methyl-D-erythritol 2-phosphate contacts are provided by residues 8–10 (DVH) and 34–35 (HS). His42 contacts a divalent metal cation. Residues 56–58 (DIG), 61–65 (FPDTD), 100–106 (AQAPKMA), 132–135 (TTTE), Phe139, and Arg142 each bind 4-CDP-2-C-methyl-D-erythritol 2-phosphate.

The protein belongs to the IspF family. In terms of assembly, homotrimer. The cofactor is a divalent metal cation.

It catalyses the reaction 4-CDP-2-C-methyl-D-erythritol 2-phosphate = 2-C-methyl-D-erythritol 2,4-cyclic diphosphate + CMP. The protein operates within isoprenoid biosynthesis; isopentenyl diphosphate biosynthesis via DXP pathway; isopentenyl diphosphate from 1-deoxy-D-xylulose 5-phosphate: step 4/6. Functionally, involved in the biosynthesis of isopentenyl diphosphate (IPP) and dimethylallyl diphosphate (DMAPP), two major building blocks of isoprenoid compounds. Catalyzes the conversion of 4-diphosphocytidyl-2-C-methyl-D-erythritol 2-phosphate (CDP-ME2P) to 2-C-methyl-D-erythritol 2,4-cyclodiphosphate (ME-CPP) with a corresponding release of cytidine 5-monophosphate (CMP). The sequence is that of 2-C-methyl-D-erythritol 2,4-cyclodiphosphate synthase from Pseudomonas savastanoi pv. phaseolicola (strain 1448A / Race 6) (Pseudomonas syringae pv. phaseolicola (strain 1448A / Race 6)).